A 620-amino-acid chain; its full sequence is Membrane protein insertase YidC (620 aa).

6 helical membrane-spanning segments follow: residues 5-25, 343-363, 366-386, 436-456, 482-502, and 529-549; these read QIIGISLISVLMLGYFGFMST, LGWPLVSWINRFVVIPVFDGL, VFSSFGLIIVILVLLIKLVLL, LSGCIPVLLQMPILLAMFNFF, LPFTIPFYGSHVSMFTLLMTI, and PVVFLFVLNSFPAGLSFYYFV.

Belongs to the OXA1/ALB3/YidC family. Type 1 subfamily. Interacts with the Sec translocase complex via SecD. Specifically interacts with transmembrane segments of nascent integral membrane proteins during membrane integration.

It localises to the cell inner membrane. Functionally, required for the insertion and/or proper folding and/or complex formation of integral membrane proteins into the membrane. Involved in integration of membrane proteins that insert both dependently and independently of the Sec translocase complex, as well as at least some lipoproteins. Aids folding of multispanning membrane proteins. This is Membrane protein insertase YidC from Cytophaga hutchinsonii (strain ATCC 33406 / DSM 1761 / CIP 103989 / NBRC 15051 / NCIMB 9469 / D465).